We begin with the raw amino-acid sequence, 830 residues long: Leucine--tRNA ligase (830 aa).

The 'HIGH' region motif lies at 42–52; that stretch reads PYPSGNLHMGH. The short motif at 585–589 is the 'KMSKS' region element; the sequence is KMSKS. Lys-588 serves as a coordination point for ATP.

Belongs to the class-I aminoacyl-tRNA synthetase family.

It is found in the cytoplasm. The enzyme catalyses tRNA(Leu) + L-leucine + ATP = L-leucyl-tRNA(Leu) + AMP + diphosphate. This chain is Leucine--tRNA ligase, found in Halothermothrix orenii (strain H 168 / OCM 544 / DSM 9562).